Here is a 114-residue protein sequence, read N- to C-terminus: NADH dehydrogenase [ubiquinone] 1 subunit C2, isoform 2 (114 aa).

Residues 56–75 form a helical membrane-spanning segment; sequence GLHRQLLYITAFFFAGYYLV.

Belongs to the complex I NDUFC2 subunit family. In terms of assembly, complex I is composed of 45 different subunits.

It localises to the mitochondrion inner membrane. Its function is as follows. Accessory subunit of the mitochondrial membrane respiratory chain NADH dehydrogenase (Complex I), that is believed not to be involved in catalysis. Complex I functions in the transfer of electrons from NADH to the respiratory chain. The immediate electron acceptor for the enzyme is believed to be ubiquinone. The chain is NADH dehydrogenase [ubiquinone] 1 subunit C2, isoform 2 (NDUFC2-KCTD14) from Homo sapiens (Human).